A 72-amino-acid chain; its full sequence is Small ribosomal subunit protein bS18 (72 aa).

Belongs to the bacterial ribosomal protein bS18 family. Part of the 30S ribosomal subunit. Forms a tight heterodimer with protein bS6.

Its function is as follows. Binds as a heterodimer with protein bS6 to the central domain of the 16S rRNA, where it helps stabilize the platform of the 30S subunit. This is Small ribosomal subunit protein bS18 from Francisella philomiragia subsp. philomiragia (strain ATCC 25017 / CCUG 19701 / FSC 153 / O#319-036).